The sequence spans 439 residues: Dolichyl-diphosphooligosaccharide--protein glycosyltransferase 48 kDa subunit (439 aa).

A signal peptide spans 1 to 26; that stretch reads MEPSTAARAWALFWLLPPLLGAVCAS. Topologically, residues 27–410 are lumenal; the sequence is GPRTLVLLDN…YERFIPSAYP (384 aa). The helical transmembrane segment at 411-430 threads the bilayer; it reads YYASAFSMMLGLFIFSIVFL. The Cytoplasmic segment spans residues 431–439; that stretch reads HMKEKEKSD.

This sequence belongs to the DDOST 48 kDa subunit family. In terms of assembly, component of the oligosaccharyltransferase (OST) complex. OST exists in two different complex forms which contain common core subunits RPN1, RPN2, OST48, OST4, DAD1 and TMEM258, either STT3A or STT3B as catalytic subunits, and form-specific accessory subunits. STT3A complex assembly occurs through the formation of 3 subcomplexes. Subcomplex 1 contains RPN1 and TMEM258, subcomplex 2 contains the STT3A-specific subunits STT3A, DC2/OSTC, and KCP2 as well as the core subunit OST4, and subcomplex 3 contains RPN2, DAD1, and OST48. The STT3A complex can form stable complexes with the Sec61 complex or with both the Sec61 and TRAP complexes. Interacts with SMIM22.

It is found in the endoplasmic reticulum membrane. Its pathway is protein modification; protein glycosylation. Functionally, subunit of the oligosaccharyl transferase (OST) complex that catalyzes the initial transfer of a defined glycan (Glc(3)Man(9)GlcNAc(2) in eukaryotes) from the lipid carrier dolichol-pyrophosphate to an asparagine residue within an Asn-X-Ser/Thr consensus motif in nascent polypeptide chains, the first step in protein N-glycosylation. N-glycosylation occurs cotranslationally and the complex associates with the Sec61 complex at the channel-forming translocon complex that mediates protein translocation across the endoplasmic reticulum (ER). All subunits are required for a maximal enzyme activity. Required for the assembly of both SST3A- and SS3B-containing OST complexes. In Pongo abelii (Sumatran orangutan), this protein is Dolichyl-diphosphooligosaccharide--protein glycosyltransferase 48 kDa subunit.